The chain runs to 1185 residues: Syntaxin-binding protein 5-like (1185 aa).

Methionine 1 is modified (N-acetylmethionine). The disordered stretch occupies residues 15–44 (ASSPGSGSSSGSNSGGAGSGSVHPGGTAGL). Residues 16–26 (SSPGSGSSSGS) are compositionally biased toward low complexity. WD repeat units follow at residues 73–106 (TALAFDPVQKILAIGTRTGAIRILGRPGVDCYCQ), 113–152 (VLQLQFLINEGALVSASSDDTLHLWNLRQKRPAILHSLKF), 157–193 (ITYCHLPFQSKWLYVGTERGNTHIVNIESFILSGYVI), 212–246 (HLSDSPRDEGKLLIGYENGTVVFWDLKSKRAELRV), 252–284 (IHSIDWHHEGKQFMCSHSDGSLTLWNLKSPSRP), 306–348 (PILK…KAIT), 356–390 (IVEFLTLCETPYPNEFQEPYAVAVLLEKDLIVVDL), 412–489 (TCTA…YKLK), 517–628 (QMIY…DLVI), and 642–704 (TSLS…IADN). A Phosphothreonine modification is found at threonine 567. The disordered stretch occupies residues 567–601 (TPEPETSPPFPDLSSQLPPSRSLSGSTNTVSSEGV). Serine 573, serine 588, and serine 592 each carry phosphoserine. Residues 578–592 (DLSSQLPPSRSLSGS) are compositionally biased toward low complexity. Threonine 595 carries the post-translational modification Phosphothreonine. A Phosphoserine modification is found at serine 598. Arginine 708 carries the omega-N-methylarginine modification. Residues 747–768 (TSDHVNGHCTSPTSQSCSSGKR) are compositionally biased toward polar residues. A disordered region spans residues 747–770 (TSDHVNGHCTSPTSQSCSSGKRLS). Phosphoserine occurs at positions 762, 764, 765, 770, 771, 792, 799, 811, 819, 821, and 822. WD repeat units lie at residues 831 to 888 (ITAL…SGTF), 897 to 968 (TFSC…QTCL), 973 to 1017 (ITET…LDVN), and 1031 to 1054 (CFTNEGQALYLVSPTEIQRLTYSQ). Threonine 1092 is modified (phosphothreonine). In terms of domain architecture, v-SNARE coiled-coil homology spans 1120–1180 (SIEGMKGAAG…HELMLKYKDK (61 aa)).

The protein belongs to the WD repeat L(2)GL family. Interacts with STX1A and STX4. Phosphorylated, leading to STXBP5L increased turnover and subsequent de-repression of insulin secretion. Phosphorylated on serine residues in response to glucose or phorbol esters. In terms of processing, ubiquitinated by the E3 ligase SYVN1, leading to STXBP5L proteasomal degradation. Detected in hippocampus and cerebellum. Expressed in pancreatic beta-cells where it modulates insulin secretion.

Its subcellular location is the cytoplasm. The protein localises to the cell membrane. It is found in the membrane. Plays a role in vesicle trafficking and exocytosis inhibition. In pancreatic beta-cells, inhibits insulin secretion probably by interacting with and regulating STX1A and STX4, key t-SNARE proteins involved in the fusion of insulin granules to the plasma membrane. Also plays a role in neurotransmitter release by inhibiting basal acetylcholine release from axon terminals and by preventing synaptic fatigue upon repetitive stimulation. Promotes as well axonal outgrowth. The chain is Syntaxin-binding protein 5-like (Stxbp5l) from Mus musculus (Mouse).